Consider the following 181-residue polypeptide: NAD(P)H-quinone oxidoreductase subunit I, chloroplastic (181 aa).

4Fe-4S ferredoxin-type domains follow at residues 52–81 (GRIH…VDWE) and 92–121 (KSYS…MTEE). 8 residues coordinate [4Fe-4S] cluster: Cys-61, Cys-64, Cys-67, Cys-71, Cys-101, Cys-104, Cys-107, and Cys-111.

This sequence belongs to the complex I 23 kDa subunit family. NDH is composed of at least 16 different subunits, 5 of which are encoded in the nucleus. The cofactor is [4Fe-4S] cluster.

It localises to the plastid. The protein resides in the chloroplast thylakoid membrane. It carries out the reaction a plastoquinone + NADH + (n+1) H(+)(in) = a plastoquinol + NAD(+) + n H(+)(out). It catalyses the reaction a plastoquinone + NADPH + (n+1) H(+)(in) = a plastoquinol + NADP(+) + n H(+)(out). Functionally, NDH shuttles electrons from NAD(P)H:plastoquinone, via FMN and iron-sulfur (Fe-S) centers, to quinones in the photosynthetic chain and possibly in a chloroplast respiratory chain. The immediate electron acceptor for the enzyme in this species is believed to be plastoquinone. Couples the redox reaction to proton translocation, and thus conserves the redox energy in a proton gradient. The protein is NAD(P)H-quinone oxidoreductase subunit I, chloroplastic of Staurastrum punctulatum (Green alga).